The sequence spans 232 residues: tRNA1(Val) (adenine(37)-N6)-methyltransferase (232 aa).

This sequence belongs to the methyltransferase superfamily. tRNA (adenine-N(6)-)-methyltransferase family.

It localises to the cytoplasm. It catalyses the reaction adenosine(37) in tRNA1(Val) + S-adenosyl-L-methionine = N(6)-methyladenosine(37) in tRNA1(Val) + S-adenosyl-L-homocysteine + H(+). In terms of biological role, specifically methylates the adenine in position 37 of tRNA(1)(Val) (anticodon cmo5UAC). This is tRNA1(Val) (adenine(37)-N6)-methyltransferase from Haemophilus influenzae (strain PittGG).